A 546-amino-acid chain; its full sequence is Chaperonin GroEL (546 aa).

ATP is bound by residues 30-33 (TLGP), lysine 51, 87-91 (DGTTT), glycine 415, and aspartate 495.

It belongs to the chaperonin (HSP60) family. In terms of assembly, forms a cylinder of 14 subunits composed of two heptameric rings stacked back-to-back. Interacts with the co-chaperonin GroES.

It localises to the cytoplasm. It catalyses the reaction ATP + H2O + a folded polypeptide = ADP + phosphate + an unfolded polypeptide.. In terms of biological role, together with its co-chaperonin GroES, plays an essential role in assisting protein folding. The GroEL-GroES system forms a nano-cage that allows encapsulation of the non-native substrate proteins and provides a physical environment optimized to promote and accelerate protein folding. The polypeptide is Chaperonin GroEL (Alteromonas mediterranea (strain DSM 17117 / CIP 110805 / LMG 28347 / Deep ecotype)).